The following is a 343-amino-acid chain: MSDRQAALDMALKQIEKQFGKGSIMKLGEQAERRISTISSGSLALDVALGVGGYPRGRVIEIYGPESSGKTTVSLHAIAEVQRQGGQAAFIDAEHAMDPVYAQKLGVNIDELLLSQPDTGEQGLEIAEALVRSGAVDIIVIDSVAALVPKAEIEGDMGDSHVGLQARLMSQALRKLSGAINKSKTIAIFINQIREKVGVMFGNPETTPGGRALKFYSTVRLEVRRAEQLKQGNDIVGNKTKVKVVKNKVAPPFRVAEVDIMYGEGISREGEILDMASELDIVQKSGAWYSYNEERLGQGRENSKQFLKENTDLREEIAFFVREHHGIGENSGVEDTEDSTRQD.

Residue 64 to 71 (GPESSGKT) participates in ATP binding.

The protein belongs to the RecA family.

The protein localises to the cytoplasm. In terms of biological role, can catalyze the hydrolysis of ATP in the presence of single-stranded DNA, the ATP-dependent uptake of single-stranded DNA by duplex DNA, and the ATP-dependent hybridization of homologous single-stranded DNAs. It interacts with LexA causing its activation and leading to its autocatalytic cleavage. The chain is Protein RecA from Bacillus mycoides (strain KBAB4) (Bacillus weihenstephanensis).